The primary structure comprises 87 residues: Putative regulatory protein GK1166 (87 aa).

It belongs to the RemA family.

The polypeptide is Putative regulatory protein GK1166 (Geobacillus kaustophilus (strain HTA426)).